The chain runs to 2210 residues: MTAAANWVANGASLEDCHSNLFSLAELTGIKWRRYNFGGHGDCGPIISAPAQDDPILLSFIRCLQANLLCVWRRDVKPDCKELWIFWWGDEPNLVGVIHHELQVVEEGLWENGLSYECRTLLFKAIHNLLERCLMDKNFVRIGKWFVRPYEKDEKPVNKSEHLSCAFTFFLHGESNVCTSVEIAQHQPIYLINEEHIHMAQSSPAPFQVLVSPYGLNGTLTGQAYKMSDPATRKLIEEWQYFYPMVLKKKEESKEEDELGYDDDFPVAVEVIVGGVRMVYPSAFVLISQNDIPVPQSVASAGGHIAVGQQGLGSVKDPSNCGMPLTPPTSPEQAILGESGGMQSAASHLVSQDGGMITMHSPKRSGKIPPKLHNHMVHRVWKECILNRTQSKRSQMSTPTLEEEPASNPATWDFVDPTQRVSCSCSRHKLLKRCAVGPNRPPTVSQPGFSAGPSSSSSLPPPASSKHKTAERQEKGDKLQKRPLIPFHHRPSVAEELCMEQDTPGQKLGLAGIDSSLEVSSSRKYDKQMAVPSRNTSKQMNLNPMDSPHSPISPLPPTLSPQPRGQETESLDPPSVPVNPALYGNGLELQQLSTLDDRTVLVGQRLPLMAEVSETALYCGIRPSNPESSEKWWHSYRLPPSDDAEFRPPELQGERCDAKMEVNSESTALQRLLAQPNKRFKIWQDKQPQLQPLHFLDPLPLSQQPGDSLGEVNDPYTFEDGDIKYIFTANKKCKQGTEKDSLKKNKSEDGFGTKDVTTPGHSTPVPDGKNAMSIFSSATKTDVRQDNAAGRAGSSSLTQVTDLAPSLHDLDNIFDNSDDDELGAVSPALRSSKMPAVGTEDRPLGKDGRAAVPYPPTVADLQRMFPTPPSLEQHPAFSPVMNYKDGISSETVTALGMMESPMVSMVSTQLTEFKMEVEDGLGSPKPEEIKDFSYVHKVPSFQPFVGSSMFAPLKMLPSHCLLPLKIPDACLFRPSWAIPPKIEQLPMPPAATFIRDGYNNVPSVGSLADPDYLNTPQMNTPVTLNSAAPASNSGAGVLPSPATPRFSVPTPRTPRTPRTPRGGGTASGQGSVKYDSTDQGSPASTPSTTRPLNSVEPATMQPIPEAHSLYVTLILSDSVMNIFKDRNFDSCCICACNMNIKGADVGLYIPDSSNEDQYRCTCGFSAIMNRKLGYNSGLFLEDELDIFGKNSDIGQAAERRLMMCQSTFLPQVEGTKKPQEPPISLLLLLQNQHTQPFASLNFLDYISSNNRQTLPCVSWSYDRVQADNNDYWTECFNALEQGRQYVDNPTGGKVDEALVRSATVHSWPHSNVLDISMLSSQDVVRMLLSLQPFLQDAIQKKRTGRTWENIQHVQGPLTWQQFHKMAGRGTYGSEESPEPLPIPTLLVGYDKDFLTISPFSLPFWERLLLDPYGGHRDVAYIVVCPENEALLEGAKTFFRDLSAVYEMCRLGQHKPICKVLRDGIMRVGKTVAQKLTDELVSEWFNQPWSGEENDNHSRLKLYAQVCRHHLAPYLATLQLDSSLLIPPKYQTPPAAAQGQATPGNAGPLAPNGSAAPPAGSAFNPTSNSSSTNPAASSSASGSSVPPVSSSASAPGISQISTTSSSGFSGSVGGQNPSTGGISADRTQGNIGCGGDTDPGQSSSQPSQDGQESVTERERIGIPTEPDSADSHAHPPAVVIYMVDPFTYAAEEDSTSGNFWLLSLMRCYTEMLDNLPEHMRNSFILQIVPCQYMLQTMKDEQVFYIQYLKSMAFSVYCQCRRPLPTQIHIKSLTGFGPAASIEMTLKNPERPSPIQLYSPPFILAPIKDKQTELGETFGEASQKYNVLFVGYCLSHDQRWLLASCTDLHGELLETCVVNIALPNRSRRSKVSARKIGLQKLWEWCIGIVQMTSLPWRVVIGRLGRLGHGELKDWSILLGECSLQTISKKLKDVCRMCGISAADSPSILSACLVAMEPQGSFVVMPDAVTMGSVFGRSTALNMQSSQLNTPQDASCTHILVFPTSSTIQVAPANYPNEDGFSPNNDDMFVDLPFPDDMDNDIGILMTGNLHSSPNSSPVPSPGSPSGIGVGSHFQHSRSQGERLLSREAPEELKQQPLALGYFVSTAKAENLPQWFWSSCPQAQNQCPLFLKASLHHHISVAQTDELLPARNSQRVPHPLDSKTTSDVLRFVLEQYNALSWLTCNPATQDRTSCLPVHFVVLTQLYNAIMNIL.

Residues 391–400 (SKRSQMSTPT) show a composition bias toward polar residues. Disordered stretches follow at residues 391-414 (SKRSQMSTPTLEEEPASNPATWDF), 435-489 (AVGP…PFHH), and 519-582 (VSSS…NPAL). The span at 445–458 (SQPGFSAGPSSSSS) shows a compositional bias: low complexity. Residues 468–480 (KTAERQEKGDKLQ) are compositionally biased toward basic and acidic residues. Polar residues predominate over residues 533-544 (SRNTSKQMNLNP). Residues 551–560 (PISPLPPTLS) are compositionally biased toward pro residues. Residues Ser553 and Ser560 each carry the phosphoserine modification. Residues 669–673 (LQRLL) carry the LXXLL motif 1 motif. Positions 736–752 (GTEKDSLKKNKSEDGFG) are enriched in basic and acidic residues. The segment at 736–770 (GTEKDSLKKNKSEDGFGTKDVTTPGHSTPVPDGKN) is disordered. Phosphoserine occurs at positions 817, 826, and 923. The interval 1016–1096 (PQMNTPVTLN…STTRPLNSVE (81 aa)) is disordered. Residues 1025-1036 (NSAAPASNSGAG) show a composition bias toward low complexity. Residues 1077–1092 (TDQGSPASTPSTTRPL) are compositionally biased toward polar residues. Positions 1225 to 1229 (LLLLL) match the LXXLL motif 2 motif. The leucine-zipper stretch occupies residues 1380–1401 (LPIPTLLVGYDKDFLTISPFSL). 2 disordered regions span residues 1530–1656 (QTPP…VTER) and 2045–2080 (GNLHSSPNSSPVPSPGSPSGIGVGSHFQHSRSQGER). Residues 1531–1608 (TPPAAAQGQA…ISTTSSSGFS (78 aa)) are compositionally biased toward low complexity. A compositionally biased stretch (polar residues) spans 1615–1629 (NPSTGGISADRTQGN). A compositionally biased stretch (low complexity) spans 1637-1650 (DPGQSSSQPSQDGQ). The residue at position 2083 (Ser2083) is a Phosphoserine.

Belongs to the Mediator complex subunit 13 family. Component of the Mediator complex, which is composed of MED1, MED4, MED6, MED7, MED8, MED9, MED10, MED11, MED12, MED13, MED13L, MED14, MED15, MED16, MED17, MED18, MED19, MED20, MED21, MED22, MED23, MED24, MED25, MED26, MED27, MED29, MED30, MED31, CCNC, CDK8 and CDC2L6/CDK11. The MED12, MED13, CCNC and CDK8 subunits form a distinct module termed the CDK8 module. Mediator containing the CDK8 module is less active than Mediator lacking this module in supporting transcriptional activation. Individual preparations of the Mediator complex lacking one or more distinct subunits have been variously termed ARC, CRSP, DRIP, PC2, SMCC and TRAP. As to expression, highly expressed in brain (cerebellum), heart (aorta), skeletal muscle, kidney, placenta and peripheral blood leukocytes. Highly expressed in fetal brain.

It is found in the nucleus. Functionally, component of the Mediator complex, a coactivator involved in the regulated transcription of nearly all RNA polymerase II-dependent genes. Mediator functions as a bridge to convey information from gene-specific regulatory proteins to the basal RNA polymerase II transcription machinery. Mediator is recruited to promoters by direct interactions with regulatory proteins and serves as a scaffold for the assembly of a functional preinitiation complex with RNA polymerase II and the general transcription factors. This subunit may specifically regulate transcription of targets of the Wnt signaling pathway and SHH signaling pathway. The sequence is that of Mediator of RNA polymerase II transcription subunit 13-like (MED13L) from Homo sapiens (Human).